The sequence spans 280 residues: uncharacterized protein (280 aa).

The DUF1279 domain occupies 96-208 (DKSIGIFQRF…GYLSTPPPVK (113 aa)). A helical transmembrane segment spans residues 115 to 135 (VMVPVHIVTSTVWFGSFYYAA). Residues 207–274 (VKEFLQDKME…KLQETKDKMS (68 aa)) adopt a coiled-coil conformation. The segment at 245–280 (SERMEETKERFSETKDKFSEKLQETKDKMSFRKKAD) is disordered.

Its subcellular location is the membrane. This is an uncharacterized protein from Danio rerio (Zebrafish).